We begin with the raw amino-acid sequence, 343 residues long: L-threonine 3-dehydrogenase (343 aa).

Cys38 provides a ligand contact to Zn(2+). Active-site charge relay system residues include Thr40 and His43. Residues His63, Glu64, Cys93, Cys96, Cys99, and Cys107 each coordinate Zn(2+). NAD(+)-binding positions include Ile175, Asp195, Arg200, 262–264 (LGI), and 286–287 (IY).

It belongs to the zinc-containing alcohol dehydrogenase family. In terms of assembly, homotetramer. It depends on Zn(2+) as a cofactor.

Its subcellular location is the cytoplasm. The catalysed reaction is L-threonine + NAD(+) = (2S)-2-amino-3-oxobutanoate + NADH + H(+). Its pathway is amino-acid degradation; L-threonine degradation via oxydo-reductase pathway; glycine from L-threonine: step 1/2. Catalyzes the NAD(+)-dependent oxidation of L-threonine to 2-amino-3-ketobutyrate. This chain is L-threonine 3-dehydrogenase, found in Burkholderia thailandensis (strain ATCC 700388 / DSM 13276 / CCUG 48851 / CIP 106301 / E264).